We begin with the raw amino-acid sequence, 237 residues long: 2,3,4,5-tetrahydropyridine-2,6-dicarboxylate N-acetyltransferase (237 aa).

The protein belongs to the transferase hexapeptide repeat family. DapH subfamily.

The catalysed reaction is (S)-2,3,4,5-tetrahydrodipicolinate + acetyl-CoA + H2O = L-2-acetamido-6-oxoheptanedioate + CoA. Its pathway is amino-acid biosynthesis; L-lysine biosynthesis via DAP pathway; LL-2,6-diaminopimelate from (S)-tetrahydrodipicolinate (acetylase route): step 1/3. Catalyzes the transfer of an acetyl group from acetyl-CoA to tetrahydrodipicolinate. The protein is 2,3,4,5-tetrahydropyridine-2,6-dicarboxylate N-acetyltransferase of Alkaliphilus metalliredigens (strain QYMF).